The sequence spans 247 residues: MPITVNKLRHDTHHFFYKKIGAIFFISIFATFMNILIDMFIKPDMHIVSIMENNKFINASSLLEFIQNMNLNEKHELLKYSILKIMESLISKTTLLGSIIILISVVSEPKKKSIVSSIRTFFLFFPSLFILNFLTTFIIQIGFMLLIIPGILLSIILSLSPIILFFKKNRLLDSIRLSMYISWKYIKIIGPGVLFWMCGKFILTMLLAHFSLINKNVLFLISNISMNILFSILIIYLFRFYMIFLRS.

6 consecutive transmembrane segments (helical) span residues 20 to 40 (IGAI…IDMF), 85 to 105 (IMES…LISV), 114 to 134 (IVSS…LNFL), 137 to 157 (FIIQ…SIIL), 188 to 208 (IIGP…MLLA), and 218 to 238 (LFLI…IYLF).

It belongs to the UPF0259 family.

It is found in the cell membrane. The protein is UPF0259 membrane protein BUAP5A_271 of Buchnera aphidicola subsp. Acyrthosiphon pisum (strain 5A).